The following is a 407-amino-acid chain: Cytochrome P450-pinF2, plant-inducible (407 aa).

Heme is bound at residue Cys356.

It belongs to the cytochrome P450 family. The cofactor is heme.

Its function is as follows. Not essential for virulence, but may be involved in the detoxification of plant protective agents at the site of wounding. In Rhizobium radiobacter (Agrobacterium tumefaciens), this protein is Cytochrome P450-pinF2, plant-inducible (cyp104).